The primary structure comprises 113 residues: Large ribosomal subunit protein uL24 (113 aa).

Belongs to the universal ribosomal protein uL24 family. As to quaternary structure, part of the 50S ribosomal subunit.

One of two assembly initiator proteins, it binds directly to the 5'-end of the 23S rRNA, where it nucleates assembly of the 50S subunit. Functionally, one of the proteins that surrounds the polypeptide exit tunnel on the outside of the subunit. The sequence is that of Large ribosomal subunit protein uL24 from Micrococcus luteus (strain ATCC 4698 / DSM 20030 / JCM 1464 / CCM 169 / CCUG 5858 / IAM 1056 / NBRC 3333 / NCIMB 9278 / NCTC 2665 / VKM Ac-2230) (Micrococcus lysodeikticus).